The chain runs to 426 residues: L-cysteine:1D-myo-inositol 2-amino-2-deoxy-alpha-D-glucopyranoside ligase (426 aa).

Position 43 (Cys-43) interacts with Zn(2+). Residues 43-46 (CGIT), Ser-58, and 81-83 (NVT) contribute to the L-cysteinyl-5'-AMP site. A 'HIGH' region motif is present at residues 45-55 (ITPYDATHMGH). The short motif at 200 to 205 (ERGGDP) is the 'ERGGDP' region element. Trp-241 contacts L-cysteinyl-5'-AMP. A Zn(2+)-binding site is contributed by Cys-245. Residue 263–265 (GSD) participates in L-cysteinyl-5'-AMP binding. A Zn(2+)-binding site is contributed by His-270. Val-296 lines the L-cysteinyl-5'-AMP pocket. Residues 302–306 (KMSKS) carry the 'KMSKS' region motif.

It belongs to the class-I aminoacyl-tRNA synthetase family. MshC subfamily. Monomer. It depends on Zn(2+) as a cofactor.

The enzyme catalyses 1D-myo-inositol 2-amino-2-deoxy-alpha-D-glucopyranoside + L-cysteine + ATP = 1D-myo-inositol 2-(L-cysteinylamino)-2-deoxy-alpha-D-glucopyranoside + AMP + diphosphate + H(+). In terms of biological role, catalyzes the ATP-dependent condensation of GlcN-Ins and L-cysteine to form L-Cys-GlcN-Ins. The protein is L-cysteine:1D-myo-inositol 2-amino-2-deoxy-alpha-D-glucopyranoside ligase of Arthrobacter sp. (strain FB24).